The primary structure comprises 130 residues: Small ribosomal subunit protein uS9 (130 aa).

The protein belongs to the universal ribosomal protein uS9 family.

The polypeptide is Small ribosomal subunit protein uS9 (Hahella chejuensis (strain KCTC 2396)).